A 168-amino-acid chain; its full sequence is G/U mismatch-specific DNA glycosylase (168 aa).

It belongs to the uracil-DNA glycosylase (UDG) superfamily. TDG/mug family. As to quaternary structure, binds DNA as a monomer.

The protein localises to the cytoplasm. The enzyme catalyses Specifically hydrolyzes mismatched double-stranded DNA and polynucleotides, releasing free uracil.. Excises ethenocytosine and uracil, which can arise by alkylation or deamination of cytosine, respectively, from the corresponding mispairs with guanine in ds-DNA. It is capable of hydrolyzing the carbon-nitrogen bond between the sugar-phosphate backbone of the DNA and the mispaired base. The complementary strand guanine functions in substrate recognition. Required for DNA damage lesion repair in stationary-phase cells. This chain is G/U mismatch-specific DNA glycosylase, found in Escherichia coli O9:H4 (strain HS).